The chain runs to 201 residues: Dephospho-CoA kinase (201 aa).

One can recognise a DPCK domain in the interval 6–201; sequence VMGLTGSIGM…RAIREKNPRG (196 aa). ATP is bound at residue 14–19; that stretch reads GMGKSA.

It belongs to the CoaE family.

The protein localises to the cytoplasm. It catalyses the reaction 3'-dephospho-CoA + ATP = ADP + CoA + H(+). Its pathway is cofactor biosynthesis; coenzyme A biosynthesis; CoA from (R)-pantothenate: step 5/5. In terms of biological role, catalyzes the phosphorylation of the 3'-hydroxyl group of dephosphocoenzyme A to form coenzyme A. The chain is Dephospho-CoA kinase from Novosphingobium aromaticivorans (strain ATCC 700278 / DSM 12444 / CCUG 56034 / CIP 105152 / NBRC 16084 / F199).